We begin with the raw amino-acid sequence, 358 residues long: MKGATAIINLKSLRHNLEKIQQYAPKSRLMAVVKANAYGHGLLTVAQALKNADYFSVARIEEALTLRSGGIIKPILLLEGFFSLEDLAVLQVNHIETVIHNFEQLVALEKVRLPEPVRVWMKIDTGMHRLGVRLEQADAFYQRLQNCPNVAKPIHIITHLSDVNPHHPVVTDQQIRSFDAFVQGKPGQKSIAASGAILLCPQSHRDVVRPGIALYGISPFEHFIGRDYGLLPVMTLQSPLIAVREHKAGETVGYAGEWISQTATFLGVLAIGYGDGYPQSAPTGTPVWINDRQVPIVGRVSMDMISVDLGRDATDKVGDRAVLWGDQLSLEKVASYIGYTAYELVSKLTGRVAISYVN.

The active-site Proton acceptor; specific for D-alanine is Lys-34. Position 34 is an N6-(pyridoxal phosphate)lysine (Lys-34). Arg-129 contributes to the substrate binding site. Tyr-254 serves as the catalytic Proton acceptor; specific for L-alanine. Met-302 provides a ligand contact to substrate.

Belongs to the alanine racemase family. Pyridoxal 5'-phosphate serves as cofactor.

The catalysed reaction is L-alanine = D-alanine. It functions in the pathway amino-acid biosynthesis; D-alanine biosynthesis; D-alanine from L-alanine: step 1/1. Catalyzes the interconversion of L-alanine and D-alanine. May also act on other amino acids. The chain is Alanine racemase (alr) from Hamiltonella defensa subsp. Acyrthosiphon pisum (strain 5AT).